The chain runs to 459 residues: Ribulose bisphosphate carboxylase (459 aa).

Asparagine 111 lines the substrate pocket. Lysine 166 (proton acceptor) is an active-site residue. Lysine 168 is a substrate binding site. Residues lysine 191, aspartate 193, and glutamate 194 each contribute to the Mg(2+) site. At lysine 191 the chain carries N6-carboxylysine. Residue histidine 287 is the Proton acceptor of the active site. Substrate-binding residues include arginine 288, histidine 321, and serine 368.

The protein belongs to the RuBisCO large chain family. Type II subfamily. In terms of assembly, homodimer. The cofactor is Mg(2+).

It carries out the reaction 2 (2R)-3-phosphoglycerate + 2 H(+) = D-ribulose 1,5-bisphosphate + CO2 + H2O. The enzyme catalyses D-ribulose 1,5-bisphosphate + O2 = 2-phosphoglycolate + (2R)-3-phosphoglycerate + 2 H(+). Its function is as follows. RuBisCO catalyzes two reactions: the carboxylation of D-ribulose 1,5-bisphosphate, the primary event in carbon dioxide fixation, as well as the oxidative fragmentation of the pentose substrate. Both reactions occur simultaneously and in competition at the same active site. In Paramagnetospirillum magnetotacticum (Aquaspirillum magnetotacticum), this protein is Ribulose bisphosphate carboxylase.